The primary structure comprises 287 residues: Protein REVEILLE 2 (287 aa).

Positions 31 to 85 (TITKQREKWTEAEHEKFVEALKLYGRAWRRIEEHVGTKTAVQIRSHAQKFFTKVA) constitute an HTH myb-type domain. Residues 58–81 (WRRIEEHVGTKTAVQIRSHAQKFF) constitute a DNA-binding region (H-T-H motif). A disordered region spans residues 134–177 (QDEDNRSPTSVLSAHGSDGLGSIGSNSPNSSSAELSSHTEESLS). Low complexity predominate over residues 156–169 (IGSNSPNSSSAELS).

The protein resides in the nucleus. Positive regulator for cold-responsive gene expression and cold tolerance. Part of a regulatory feedback loop that controls a subset of the circadian outputs and modulates the central oscillator. Negatively self-regulates its own expression. The chain is Protein REVEILLE 2 (RVE2) from Arabidopsis thaliana (Mouse-ear cress).